Consider the following 151-residue polypeptide: Neuroglobin (151 aa).

In terms of domain architecture, Globin spans 1-149 (MELPEPELIR…VVQAMSRGWG (149 aa)). Heme b is bound by residues His64 and His96.

The protein belongs to the globin family. In terms of assembly, monomer. Homodimer and homotetramer; disulfide-linked. Mainly monomeric but also detected as part of homodimers and homotetramers. Interacts with 14-3-3 proteins; regulates the phosphorylation of NGB. Could interact (ferrous form) with G-alpha(i) proteins (GTP-bound form). Post-translationally, phosphorylated during hypoxia by ERK1/ERK2. Phosphorylation regulates the heme pocket hexacoordination preventing the association of His-64 with the heme metal center. Thereby, promotes the access of dioxygen and nitrite to the heme and stimulates the nitrite reductase activity. Phosphorylation during hypoxia is stabilized by 14-3-3 proteins.

It localises to the cytoplasm. It is found in the cytosol. The protein localises to the mitochondrion matrix. It catalyses the reaction Fe(III)-heme b-[protein] + nitric oxide + H2O = Fe(II)-heme b-[protein] + nitrite + 2 H(+). Functionally, monomeric globin with a bis-histidyl six-coordinate heme-iron atom through which it can bind dioxygen, carbon monoxide and nitric oxide. Could help transport oxygen and increase its availability to the metabolically active neuronal tissues, though its low quantity in tissues as well as its high affinity for dioxygen, which may limit its oxygen-releasing ability, argue against it. The ferrous/deoxygenated form exhibits a nitrite reductase activity and it could produce nitric oxide which in turn inhibits cellular respiration in response to hypoxia. In its ferrous/deoxygenated state, it may also exhibit GDI (Guanine nucleotide Dissociation Inhibitor) activity toward heterotrimeric G-alpha proteins, thereby regulating signal transduction to facilitate neuroprotective responses in the wake of hypoxia and associated oxidative stress. The chain is Neuroglobin from Bos taurus (Bovine).